The sequence spans 271 residues: Phosphatidylglycerol--prolipoprotein diacylglyceryl transferase (271 aa).

The next 7 membrane-spanning stretches (helical) occupy residues tryptophan 25–valine 45, tyrosine 60–tyrosine 80, phenylalanine 103–leucine 123, tryptophan 134–glycine 154, proline 181–alanine 201, glycine 209–tyrosine 229, and glycine 235–isoleucine 255. Arginine 152 serves as a coordination point for a 1,2-diacyl-sn-glycero-3-phospho-(1'-sn-glycerol).

The protein belongs to the Lgt family.

The protein localises to the cell inner membrane. It carries out the reaction L-cysteinyl-[prolipoprotein] + a 1,2-diacyl-sn-glycero-3-phospho-(1'-sn-glycerol) = an S-1,2-diacyl-sn-glyceryl-L-cysteinyl-[prolipoprotein] + sn-glycerol 1-phosphate + H(+). It functions in the pathway protein modification; lipoprotein biosynthesis (diacylglyceryl transfer). In terms of biological role, catalyzes the transfer of the diacylglyceryl group from phosphatidylglycerol to the sulfhydryl group of the N-terminal cysteine of a prolipoprotein, the first step in the formation of mature lipoproteins. In Campylobacter jejuni subsp. jejuni serotype O:6 (strain 81116 / NCTC 11828), this protein is Phosphatidylglycerol--prolipoprotein diacylglyceryl transferase.